We begin with the raw amino-acid sequence, 258 residues long: UPF0246 protein Sfri_2896 (258 aa).

The protein belongs to the UPF0246 family.

In Shewanella frigidimarina (strain NCIMB 400), this protein is UPF0246 protein Sfri_2896.